The sequence spans 203 residues: CASP-like protein 2U6 (203 aa).

The Cytoplasmic segment spans residues 1–31 (MSEHRIPVAADKKISPPISAGEQKGCKGLKR). The chain crosses the membrane as a helical span at residues 32–52 (TDLMLRFAAFVCCTVTMVVLI). The Extracellular segment spans residues 53 to 84 (TDKQTSAIQVPGFNNLTITKTVSFDLAKAFVY). Asn67 is a glycosylation site (N-linked (GlcNAc...) asparagine). A helical transmembrane segment spans residues 85 to 105 (LVSAAGIGAGYTLLVLVLSII). Residues 106–111 (SAERSK) are Cytoplasmic-facing. Residues 112-132 (AIAWFIFVFDQLITYVLLAAA) form a helical membrane-spanning segment. Topologically, residues 133-164 (AASTEVAYMGAHAPPEASWLKVCSLFGRFCHQ) are extracellular. Residues 165–185 (LGASLVTSLISTVLFAFSAAI) traverse the membrane as a helical segment. Over 186–203 (SAYYLFSNTNVRPAYSKG) the chain is Cytoplasmic.

It belongs to the Casparian strip membrane proteins (CASP) family. Homodimer and heterodimers.

The protein localises to the cell membrane. The polypeptide is CASP-like protein 2U6 (Selaginella moellendorffii (Spikemoss)).